Reading from the N-terminus, the 125-residue chain is Ribonuclease P protein component (125 aa).

This sequence belongs to the RnpA family. In terms of assembly, consists of a catalytic RNA component (M1 or rnpB) and a protein subunit.

The catalysed reaction is Endonucleolytic cleavage of RNA, removing 5'-extranucleotides from tRNA precursor.. In terms of biological role, RNaseP catalyzes the removal of the 5'-leader sequence from pre-tRNA to produce the mature 5'-terminus. It can also cleave other RNA substrates such as 4.5S RNA. The protein component plays an auxiliary but essential role in vivo by binding to the 5'-leader sequence and broadening the substrate specificity of the ribozyme. The chain is Ribonuclease P protein component from Rhodococcus jostii (strain RHA1).